Reading from the N-terminus, the 343-residue chain is 3-hydroxy-3-methylglutaryl-CoA lyase, cytoplasmic (343 aa).

Residue glycine 2 is the site of N-myristoyl glycine attachment. One can recognise a Pyruvate carboxyltransferase domain in the interval valine 48–methionine 315. Residue arginine 56 coordinates substrate. Aspartate 57, histidine 248, and histidine 250 together coordinate a divalent metal cation. Cysteine 281 is a catalytic residue. Asparagine 290 provides a ligand contact to a divalent metal cation.

Belongs to the HMG-CoA lyase family. Requires a divalent metal cation as cofactor. In terms of tissue distribution, present at high level in duodenum and small intestine (at protein level).

It is found in the cytoplasm. The protein localises to the cytosol. The protein resides in the endoplasmic reticulum membrane. The enzyme catalyses (3S)-3-hydroxy-3-methylglutaryl-CoA = acetoacetate + acetyl-CoA. The protein operates within metabolic intermediate metabolism; (S)-3-hydroxy-3-methylglutaryl-CoA degradation; acetoacetate from (S)-3-hydroxy-3-methylglutaryl-CoA: step 1/1. Non-mitochondrial 3-hydroxy-3-methylglutaryl-CoA lyase that catalyzes a cation-dependent cleavage of (S)-3-hydroxy-3-methylglutaryl-CoA into acetyl-CoA and acetoacetate, a key step in ketogenesis, the products of which support energy production in nonhepatic animal tissues. The protein is 3-hydroxy-3-methylglutaryl-CoA lyase, cytoplasmic (Hmgcll1) of Rattus norvegicus (Rat).